We begin with the raw amino-acid sequence, 324 residues long: Polyketide biosynthesis acyltransferase homolog PksD (324 aa).

Residue serine 99 is part of the active site.

Its subcellular location is the cytoplasm. Its pathway is antibiotic biosynthesis; bacillaene biosynthesis. In terms of biological role, probably involved in some intermediate steps for the synthesis of the antibiotic polyketide bacillaene which is involved in secondary metabolism. This Bacillus subtilis (strain 168) protein is Polyketide biosynthesis acyltransferase homolog PksD (pksD).